The sequence spans 285 residues: Protein unc-1 (285 aa).

The next 2 helical transmembrane spans lie at 27 to 47 (IGTI…IVTF) and 69 to 89 (IGRL…IPCI).

The protein belongs to the band 7/mec-2 family.

Its subcellular location is the cell membrane. It is found in the cell junction. It localises to the gap junction. The polypeptide is Protein unc-1 (unc-1) (Caenorhabditis elegans).